The following is a 233-amino-acid chain: Cytidylate kinase (233 aa).

15–23 (GPSGAGKST) provides a ligand contact to ATP. Residues 183 to 201 (RRDEQDSGREHAPLRRADD) show a composition bias toward basic and acidic residues. Residues 183–202 (RRDEQDSGREHAPLRRADDA) form a disordered region.

It belongs to the cytidylate kinase family. Type 1 subfamily.

It localises to the cytoplasm. It carries out the reaction CMP + ATP = CDP + ADP. The catalysed reaction is dCMP + ATP = dCDP + ADP. This chain is Cytidylate kinase, found in Geobacter sulfurreducens (strain ATCC 51573 / DSM 12127 / PCA).